Consider the following 39-residue polypeptide: Omega-theraphotoxin-Ba1b (39 aa).

Intrachain disulfides connect cysteine 4/cysteine 17, cysteine 8/cysteine 31, and cysteine 25/cysteine 36.

It belongs to the neurotoxin 12 (Hwtx-2) family. 06 (TXP1) subfamily. In terms of tissue distribution, expressed by the venom gland.

The protein localises to the secreted. In terms of biological role, inhibits voltage-gated calcium channels (Cav) in rat cerebellar granule cells. Has insecticidal activity to crickets (Acheta domesticus). Is not toxic to mice. The polypeptide is Omega-theraphotoxin-Ba1b (Brachypelma albiceps (Mexican golden redrump tarantula)).